The chain runs to 342 residues: Holliday junction branch migration complex subunit RuvB (342 aa).

The interval 1–22 (MTLKPVREVSPGSQEGEERLEQ) is disordered. Residues 1-185 (MTLKPVREVS…FPIQERLGYY (185 aa)) form a large ATPase domain (RuvB-L) region. ATP is bound by residues leucine 24, arginine 25, glycine 66, lysine 69, threonine 70, serine 71, 132 to 134 (EDY), arginine 175, tyrosine 185, and arginine 222. Threonine 70 contacts Mg(2+). Positions 186–256 (EPTELREIAV…IVETTLERLE (71 aa)) are small ATPAse domain (RuvB-S). The segment at 259-342 (GRGLDAMDRR…RPQGKQGSLI (84 aa)) is head domain (RuvB-H). Residues arginine 295, arginine 314, and arginine 319 each contribute to the DNA site.

Belongs to the RuvB family. In terms of assembly, homohexamer. Forms an RuvA(8)-RuvB(12)-Holliday junction (HJ) complex. HJ DNA is sandwiched between 2 RuvA tetramers; dsDNA enters through RuvA and exits via RuvB. An RuvB hexamer assembles on each DNA strand where it exits the tetramer. Each RuvB hexamer is contacted by two RuvA subunits (via domain III) on 2 adjacent RuvB subunits; this complex drives branch migration. In the full resolvosome a probable DNA-RuvA(4)-RuvB(12)-RuvC(2) complex forms which resolves the HJ.

The protein localises to the cytoplasm. The enzyme catalyses ATP + H2O = ADP + phosphate + H(+). Its function is as follows. The RuvA-RuvB-RuvC complex processes Holliday junction (HJ) DNA during genetic recombination and DNA repair, while the RuvA-RuvB complex plays an important role in the rescue of blocked DNA replication forks via replication fork reversal (RFR). RuvA specifically binds to HJ cruciform DNA, conferring on it an open structure. The RuvB hexamer acts as an ATP-dependent pump, pulling dsDNA into and through the RuvAB complex. RuvB forms 2 homohexamers on either side of HJ DNA bound by 1 or 2 RuvA tetramers; 4 subunits per hexamer contact DNA at a time. Coordinated motions by a converter formed by DNA-disengaged RuvB subunits stimulates ATP hydrolysis and nucleotide exchange. Immobilization of the converter enables RuvB to convert the ATP-contained energy into a lever motion, pulling 2 nucleotides of DNA out of the RuvA tetramer per ATP hydrolyzed, thus driving DNA branch migration. The RuvB motors rotate together with the DNA substrate, which together with the progressing nucleotide cycle form the mechanistic basis for DNA recombination by continuous HJ branch migration. Branch migration allows RuvC to scan DNA until it finds its consensus sequence, where it cleaves and resolves cruciform DNA. This Anaeromyxobacter sp. (strain Fw109-5) protein is Holliday junction branch migration complex subunit RuvB.